Consider the following 101-residue polypeptide: Urease subunit beta (101 aa).

It belongs to the urease beta subunit family. Heterotrimer of UreA (gamma), UreB (beta) and UreC (alpha) subunits. Three heterotrimers associate to form the active enzyme.

It is found in the cytoplasm. It carries out the reaction urea + 2 H2O + H(+) = hydrogencarbonate + 2 NH4(+). It participates in nitrogen metabolism; urea degradation; CO(2) and NH(3) from urea (urease route): step 1/1. This Burkholderia pseudomallei (strain 668) protein is Urease subunit beta.